A 355-amino-acid polypeptide reads, in one-letter code: Holliday junction branch migration complex subunit RuvB (355 aa).

Residues 4–190 (TDKLAAERII…FGIVARLEFY (187 aa)) are large ATPase domain (RuvB-L). ATP-binding positions include Leu-29, Arg-30, Gly-71, Lys-74, Thr-75, Thr-76, 137 to 139 (EDY), Arg-180, Tyr-190, and Arg-227. Thr-75 provides a ligand contact to Mg(2+). The interval 191–261 (DADQLARIVR…VADAALAMLD (71 aa)) is small ATPAse domain (RuvB-S). Residues 264 to 355 (PVGFDLMDRK…RGMWDTPAGK (92 aa)) form a head domain (RuvB-H) region. Residues Arg-300, Arg-319, and Arg-324 each contribute to the DNA site.

Belongs to the RuvB family. As to quaternary structure, homohexamer. Forms an RuvA(8)-RuvB(12)-Holliday junction (HJ) complex. HJ DNA is sandwiched between 2 RuvA tetramers; dsDNA enters through RuvA and exits via RuvB. An RuvB hexamer assembles on each DNA strand where it exits the tetramer. Each RuvB hexamer is contacted by two RuvA subunits (via domain III) on 2 adjacent RuvB subunits; this complex drives branch migration. In the full resolvosome a probable DNA-RuvA(4)-RuvB(12)-RuvC(2) complex forms which resolves the HJ.

The protein resides in the cytoplasm. It catalyses the reaction ATP + H2O = ADP + phosphate + H(+). Functionally, the RuvA-RuvB-RuvC complex processes Holliday junction (HJ) DNA during genetic recombination and DNA repair, while the RuvA-RuvB complex plays an important role in the rescue of blocked DNA replication forks via replication fork reversal (RFR). RuvA specifically binds to HJ cruciform DNA, conferring on it an open structure. The RuvB hexamer acts as an ATP-dependent pump, pulling dsDNA into and through the RuvAB complex. RuvB forms 2 homohexamers on either side of HJ DNA bound by 1 or 2 RuvA tetramers; 4 subunits per hexamer contact DNA at a time. Coordinated motions by a converter formed by DNA-disengaged RuvB subunits stimulates ATP hydrolysis and nucleotide exchange. Immobilization of the converter enables RuvB to convert the ATP-contained energy into a lever motion, pulling 2 nucleotides of DNA out of the RuvA tetramer per ATP hydrolyzed, thus driving DNA branch migration. The RuvB motors rotate together with the DNA substrate, which together with the progressing nucleotide cycle form the mechanistic basis for DNA recombination by continuous HJ branch migration. Branch migration allows RuvC to scan DNA until it finds its consensus sequence, where it cleaves and resolves cruciform DNA. This chain is Holliday junction branch migration complex subunit RuvB, found in Burkholderia ambifaria (strain ATCC BAA-244 / DSM 16087 / CCUG 44356 / LMG 19182 / AMMD) (Burkholderia cepacia (strain AMMD)).